The following is a 271-amino-acid chain: Probable WRKY transcription factor 69 (271 aa).

2 disordered regions span residues 1–47 (MHRR…NVEK) and 130–166 (PSSS…TVTA). Residues 9–18 (ESDDEEDETY) are compositionally biased toward acidic residues. Residues 64-130 (GEVYPPSDSW…YACDHNHPFP (67 aa)) constitute a DNA-binding region (WRKY).

This sequence belongs to the WRKY group II-e family.

The protein localises to the nucleus. In terms of biological role, transcription factor. Interacts specifically with the W box (5'-(T)TGAC[CT]-3'), a frequently occurring elicitor-responsive cis-acting element. The polypeptide is Probable WRKY transcription factor 69 (WRKY69) (Arabidopsis thaliana (Mouse-ear cress)).